Here is a 162-residue protein sequence, read N- to C-terminus: NADH-quinone oxidoreductase subunit I 2 (162 aa).

4Fe-4S ferredoxin-type domains follow at residues Leu53–Glu83 and Thr93–Ile122. [4Fe-4S] cluster-binding residues include Cys63, Cys66, Cys69, Cys73, Cys102, Cys105, Cys108, and Cys112.

The protein belongs to the complex I 23 kDa subunit family. NDH-1 is composed of 14 different subunits. Subunits NuoA, H, J, K, L, M, N constitute the membrane sector of the complex. [4Fe-4S] cluster serves as cofactor.

The protein localises to the cell inner membrane. It carries out the reaction a quinone + NADH + 5 H(+)(in) = a quinol + NAD(+) + 4 H(+)(out). In terms of biological role, NDH-1 shuttles electrons from NADH, via FMN and iron-sulfur (Fe-S) centers, to quinones in the respiratory chain. The immediate electron acceptor for the enzyme in this species is believed to be ubiquinone. Couples the redox reaction to proton translocation (for every two electrons transferred, four hydrogen ions are translocated across the cytoplasmic membrane), and thus conserves the redox energy in a proton gradient. In Nitrosococcus oceani (strain ATCC 19707 / BCRC 17464 / JCM 30415 / NCIMB 11848 / C-107), this protein is NADH-quinone oxidoreductase subunit I 2.